The following is a 2136-amino-acid chain: Protein CELLULOSE SYNTHASE INTERACTIVE 3 (2136 aa).

ARM repeat units follow at residues methionine 27 to isoleucine 66, arginine 71 to lysine 111, lysine 113 to serine 152, histidine 159 to glycine 201, aspartate 204 to leucine 243, cysteine 246 to alanine 286, aspartate 289 to glycine 337, proline 376 to glycine 417, serine 419 to histidine 458, valine 461 to alanine 500, aspartate 503 to cysteine 542, glutamate 545 to histidine 584, alanine 586 to serine 618, lysine 619 to serine 663, glutamine 666 to arginine 705, asparagine 711 to serine 750, proline 752 to lysine 791, serine 811 to proline 848, proline 849 to serine 887, glutamine 936 to glutamate 980, serine 1013 to serine 1041, alanine 1042 to valine 1083, arginine 1109 to lysine 1149, glutamate 1163 to aspartate 1204, aspartate 1207 to serine 1247, histidine 1249 to aspartate 1288, glutamate 1290 to serine 1329, serine 1333 to serine 1375, lysine 1377 to aspartate 1416, glutamate 1418 to lysine 1457, valine 1460 to asparagine 1499, alanine 1518 to threonine 1546, leucine 1547 to threonine 1585, glutamate 1587 to alanine 1626, tryptophan 1628 to glutamine 1669, tyrosine 1670 to leucine 1704, alanine 1710 to arginine 1750, serine 1790 to methionine 1833, arginine 1836 to serine 1875, proline 1921 to histidine 1960, valine 1969 to glycine 2008, and leucine 2010 to isoleucine 2035. Residues lysine 1989–leucine 2106 form the C2 domain.

In terms of assembly, associates with cellulase synthase (CESA) complexes. Binds to cortical microtubules. Interacts with CESA3 and CESA6. In terms of tissue distribution, expressed in dark-grown hypocotyls, leaves (confined to vasculature and trichomes), stamen, pollen, developing siliques, and roots. Restricted in meristematic tissue of the shoot and root. Present in distinct punctae at the cell cortex, called microtubule-associated cellulose synthase compartments, that move with constant velocities of 10 to 3000 nm/min.

The protein localises to the cell membrane. It is found in the cytoplasm. Its subcellular location is the cytoskeleton. It localises to the endomembrane system. Its function is as follows. Regulator of the microtubular cytoskeleton. Microtubule-associated protein involved in the association of cellulase synthase (CESA) complexes (CSCs) and cortical microtubules. Promotes dynamics of CSCs in the plasma membrane in both microtubules-dependent and microtubules-independent manners. Regulates primary cell wall biosynthesis and cellulose microfibrils organization. This is Protein CELLULOSE SYNTHASE INTERACTIVE 3 from Arabidopsis thaliana (Mouse-ear cress).